The following is an 82-amino-acid chain: Small ribosomal subunit protein bS18 (82 aa).

The disordered stretch occupies residues 1 to 25 (MADTSSSQARRPFHRRRKTCPFSGA).

It belongs to the bacterial ribosomal protein bS18 family. Part of the 30S ribosomal subunit. Forms a tight heterodimer with protein bS6.

Functionally, binds as a heterodimer with protein bS6 to the central domain of the 16S rRNA, where it helps stabilize the platform of the 30S subunit. This chain is Small ribosomal subunit protein bS18, found in Agrobacterium fabrum (strain C58 / ATCC 33970) (Agrobacterium tumefaciens (strain C58)).